The primary structure comprises 312 residues: Ornithine carbamoyltransferase (312 aa).

Carbamoyl phosphate contacts are provided by residues 57 to 60 (STRT), Q84, R108, and 135 to 138 (HPCQ). Residues N166, D226, and 230 to 231 (SM) contribute to the L-ornithine site. Carbamoyl phosphate contacts are provided by residues 265–266 (CL) and R293.

It belongs to the aspartate/ornithine carbamoyltransferase superfamily. OTCase family.

The protein resides in the cytoplasm. The enzyme catalyses carbamoyl phosphate + L-ornithine = L-citrulline + phosphate + H(+). Its pathway is amino-acid biosynthesis; L-arginine biosynthesis; L-arginine from L-ornithine and carbamoyl phosphate: step 1/3. In terms of biological role, reversibly catalyzes the transfer of the carbamoyl group from carbamoyl phosphate (CP) to the N(epsilon) atom of ornithine (ORN) to produce L-citrulline. This is Ornithine carbamoyltransferase from Brucella ovis (strain ATCC 25840 / 63/290 / NCTC 10512).